The chain runs to 175 residues: MMMYIVFILSIIFVISFVGVSSKPSPIYGGLGLIVGGGVGCGVILSFGGSFLGLMVFLIYLGGMLVVFGYTTAMATEQYPEVWVSNKVVLGAFVLGLVVEFLIVIYALKSGEVKIMFEFDGLGDWVVYDTGGSGVFSEEATGIAALYSYGVWLVIVTGWSLFISVVIIMEITRGS.

The next 5 helical transmembrane spans lie at 1–21 (MMMY…VGVS), 25–45 (SPIY…GVIL), 47–67 (FGGS…MLVV), 88–108 (VVLG…IYAL), and 149–169 (YGVW…VIIM).

It belongs to the complex I subunit 6 family. Core subunit of respiratory chain NADH dehydrogenase (Complex I) which is composed of 45 different subunits.

Its subcellular location is the mitochondrion inner membrane. It catalyses the reaction a ubiquinone + NADH + 5 H(+)(in) = a ubiquinol + NAD(+) + 4 H(+)(out). Core subunit of the mitochondrial membrane respiratory chain NADH dehydrogenase (Complex I) which catalyzes electron transfer from NADH through the respiratory chain, using ubiquinone as an electron acceptor. Essential for the catalytic activity and assembly of complex I. In Balaenoptera physalus (Fin whale), this protein is NADH-ubiquinone oxidoreductase chain 6 (MT-ND6).